The chain runs to 348 residues: Nicotinate-nucleotide--dimethylbenzimidazole phosphoribosyltransferase (348 aa).

Residue glutamate 316 is the Proton acceptor of the active site.

Belongs to the CobT family.

The enzyme catalyses 5,6-dimethylbenzimidazole + nicotinate beta-D-ribonucleotide = alpha-ribazole 5'-phosphate + nicotinate + H(+). It participates in nucleoside biosynthesis; alpha-ribazole biosynthesis; alpha-ribazole from 5,6-dimethylbenzimidazole: step 1/2. Functionally, catalyzes the synthesis of alpha-ribazole-5'-phosphate from nicotinate mononucleotide (NAMN) and 5,6-dimethylbenzimidazole (DMB). The chain is Nicotinate-nucleotide--dimethylbenzimidazole phosphoribosyltransferase from Xanthomonas campestris pv. campestris (strain 8004).